Reading from the N-terminus, the 341-residue chain is L-threonine 3-dehydrogenase (341 aa).

Cys38 serves as a coordination point for Zn(2+). Active-site charge relay system residues include Thr40 and His43. The Zn(2+) site is built by His63, Glu64, Cys93, Cys96, Cys99, and Cys107. NAD(+) contacts are provided by residues Ile175, Asp195, Arg200, 262-264 (LGI), and 286-287 (IY).

It belongs to the zinc-containing alcohol dehydrogenase family. Homotetramer. Zn(2+) serves as cofactor.

The protein resides in the cytoplasm. The enzyme catalyses L-threonine + NAD(+) = (2S)-2-amino-3-oxobutanoate + NADH + H(+). The protein operates within amino-acid degradation; L-threonine degradation via oxydo-reductase pathway; glycine from L-threonine: step 1/2. In terms of biological role, catalyzes the NAD(+)-dependent oxidation of L-threonine to 2-amino-3-ketobutyrate. This is L-threonine 3-dehydrogenase from Colwellia psychrerythraea (strain 34H / ATCC BAA-681) (Vibrio psychroerythus).